Consider the following 202-residue polypeptide: Small ribosomal subunit protein uS4 (202 aa).

The span at 1–13 (MSRYRGPRLRVTR) shows a compositional bias: basic residues. The disordered stretch occupies residues 1 to 42 (MSRYRGPRLRVTRRLGELPGLTRKASKKSNPPGQHGQARRKR). Positions 90–152 (NRLDNVCFRL…KASKKLVEGN (63 aa)) constitute an S4 RNA-binding domain.

Belongs to the universal ribosomal protein uS4 family. Part of the 30S ribosomal subunit. Contacts protein S5. The interaction surface between S4 and S5 is involved in control of translational fidelity.

One of the primary rRNA binding proteins, it binds directly to 16S rRNA where it nucleates assembly of the body of the 30S subunit. Its function is as follows. With S5 and S12 plays an important role in translational accuracy. The sequence is that of Small ribosomal subunit protein uS4 from Prochlorococcus marinus (strain MIT 9515).